A 96-amino-acid polypeptide reads, in one-letter code: Probable RNA-binding protein YqeI (96 aa).

A CRM domain is found at 1 to 96; that stretch reads MLTGKQKRFL…SKENKQIELP (96 aa).

The chain is Probable RNA-binding protein YqeI (yqeI) from Bacillus subtilis (strain 168).